Reading from the N-terminus, the 339-residue chain is DNA-directed RNA polymerase subunit alpha (339 aa).

Positions 1–235 (MVIQKNWQEL…DQLQIFVNFE (235 aa)) are alpha N-terminal domain (alpha-NTD). The segment at 251–339 (FNPALLKKVD…DLAKRFEEHY (89 aa)) is alpha C-terminal domain (alpha-CTD).

It belongs to the RNA polymerase alpha chain family. In terms of assembly, homodimer. The RNAP catalytic core consists of 2 alpha, 1 beta, 1 beta' and 1 omega subunit. When a sigma factor is associated with the core the holoenzyme is formed, which can initiate transcription.

It carries out the reaction RNA(n) + a ribonucleoside 5'-triphosphate = RNA(n+1) + diphosphate. Functionally, DNA-dependent RNA polymerase catalyzes the transcription of DNA into RNA using the four ribonucleoside triphosphates as substrates. This Methylobacterium nodulans (strain LMG 21967 / CNCM I-2342 / ORS 2060) protein is DNA-directed RNA polymerase subunit alpha.